Reading from the N-terminus, the 315-residue chain is Ribosomal protein L11 methyltransferase (315 aa).

S-adenosyl-L-methionine contacts are provided by Thr164, Gly185, Asp207, and Asn250.

The protein belongs to the methyltransferase superfamily. PrmA family.

It is found in the cytoplasm. The enzyme catalyses L-lysyl-[protein] + 3 S-adenosyl-L-methionine = N(6),N(6),N(6)-trimethyl-L-lysyl-[protein] + 3 S-adenosyl-L-homocysteine + 3 H(+). Its function is as follows. Methylates ribosomal protein L11. This chain is Ribosomal protein L11 methyltransferase, found in Exiguobacterium sibiricum (strain DSM 17290 / CCUG 55495 / CIP 109462 / JCM 13490 / 255-15).